Consider the following 348-residue polypeptide: Chaperone protein DnaJ (348 aa).

A J domain is found at 3–65; sequence DLYGILGVDH…EQRQRYDRHV (63 aa). The segment at 109-191 adopts a CR-type zinc-finger fold; that stretch reads GGSQVVKIDS…CYGNGSRSAP (83 aa). Zn(2+) contacts are provided by C122, C125, C139, C142, C165, C168, C179, and C182. 4 CXXCXGXG motif repeats span residues 122–129, 139–146, 165–172, and 179–186; these read CDVCNGTR, CFDCNGSG, CSKCRGNG, and CRRCYGNG.

This sequence belongs to the DnaJ family. Homodimer. Zn(2+) serves as cofactor.

Its subcellular location is the cytoplasm. Its function is as follows. Participates actively in the response to hyperosmotic and heat shock by preventing the aggregation of stress-denatured proteins and by disaggregating proteins, also in an autonomous, DnaK-independent fashion. Unfolded proteins bind initially to DnaJ; upon interaction with the DnaJ-bound protein, DnaK hydrolyzes its bound ATP, resulting in the formation of a stable complex. GrpE releases ADP from DnaK; ATP binding to DnaK triggers the release of the substrate protein, thus completing the reaction cycle. Several rounds of ATP-dependent interactions between DnaJ, DnaK and GrpE are required for fully efficient folding. Also involved, together with DnaK and GrpE, in the DNA replication of plasmids through activation of initiation proteins. The chain is Chaperone protein DnaJ from Tropheryma whipplei (strain Twist) (Whipple's bacillus).